A 718-amino-acid chain; its full sequence is Quinohemoprotein alcohol dehydrogenase ADH-IIG (718 aa).

The N-terminal stretch at 1–29 is a signal peptide; that stretch reads MRQTGLASLPLKSLAVAVLLSLAGTPALA. Glutamate 92 is a pyrroloquinoline quinone binding site. Cysteine 138 and cysteine 139 are disulfide-bonded. Residues arginine 144, threonine 189, and 205-206 contribute to the pyrroloquinoline quinone site; that span reads GA. Glutamate 207 is a binding site for Ca(2+). Threonine 264 is a binding site for pyrroloquinoline quinone. Ca(2+) is bound by residues asparagine 284 and aspartate 329. The active-site Proton acceptor is the aspartate 329. Lysine 356 is a pyrroloquinoline quinone binding site. A substrate-binding site is contributed by tryptophan 415. Residues 419–420 and alanine 571 contribute to the pyrroloquinoline quinone site; that span reads DW. The Cytochrome c domain occupies 622-699; it reads ASIEAGAKLY…QIHQYLIKRA (78 aa). The heme c site is built by cysteine 635, cysteine 638, histidine 639, and methionine 676.

The protein belongs to the bacterial PQQ dehydrogenase family. Monomer. Requires pyrroloquinoline quinone as cofactor. It depends on Ca(2+) as a cofactor. Heme c serves as cofactor.

The protein resides in the periplasm. It carries out the reaction 2 oxidized [azurin] + a primary alcohol = 2 reduced [azurin] + an aldehyde + 2 H(+). Exhibits higher affinity for 1-butanol compared to 1,2-propanediol but inhibited by 10 mM 1-butanol. Its function is as follows. Catalyzes the dye-linked oxidation of primary alcohols to the corresponding aldehydes and the (subsequent) oxidation of the aldehydes to carboxylic acids. Active with primary alcohols, glycerol, 1,2-propanediol, 1,3-propanediol but not with methanol or sugar alcohols such as D-sorbitol. The chain is Quinohemoprotein alcohol dehydrogenase ADH-IIG from Pseudomonas putida (Arthrobacter siderocapsulatus).